The chain runs to 76 residues: Alpha-amylase inhibitor Z-2685 (76 aa).

2 cysteine pairs are disulfide-bonded: C9/C25 and C43/C70.

Functionally, inhibits mammalian alpha-amylases specifically but has no action on plant and microbial alpha-amylases. This chain is Alpha-amylase inhibitor Z-2685, found in Streptomyces rochei (Streptomyces parvullus).